A 470-amino-acid polypeptide reads, in one-letter code: MSHKSDLIATNIQKYLQQRQQKELLRFITCGSVDDGKSTLMGRLLHDSKLIFEDQLASIVADSKKVGTQGDRLDLALLVDGLQSEREQGITIDVAYRYFSTDKRKFIIADTPGHEQYTRNMATGASNCDLAIILIDARKGLQTQTRRHSFICSLLGIKHVIVAVNKMDTVGYSQQIYKSIQDEYLKLAGSLQIPDIRFVPISALDGDNVVSKSPKMPWFRGSPLMHYLETIKIDYAYTDEFRFPVQLVCRPNSEFRGFQGTIVSGSAKIGDTIRVMPSGKITTIKSILSFDGELNEAEAGQSITITTYDEIDISRGDMIVHKDAISHVSSMLRANIVWMSEQPLIEYKDYYIKFLTKQVIGSVNKFNYKTDINTLKEVACGTLELNEIATIELKLSEPVCFDSYQKNRTTGAFIIIDRLTNVTAGAGMVIKPLAANDKKDSTNDYSEFELELNALIRKHFPHWDAKNLRE.

A tr-type G domain is found at 22-238 (KELLRFITCG…ETIKIDYAYT (217 aa)). Residues 31–38 (GSVDDGKS) form a G1 region. Residue 31–38 (GSVDDGKS) participates in GTP binding. The interval 89–93 (GITID) is G2. The interval 110–113 (DTPG) is G3. Residues 110–114 (DTPGH) and 165–168 (NKMD) each bind GTP. The G4 stretch occupies residues 165-168 (NKMD). Positions 202-204 (SAL) are G5.

This sequence belongs to the TRAFAC class translation factor GTPase superfamily. Classic translation factor GTPase family. CysN/NodQ subfamily. In terms of assembly, heterodimer composed of CysD, the smaller subunit, and CysN.

The catalysed reaction is sulfate + ATP + H(+) = adenosine 5'-phosphosulfate + diphosphate. It participates in sulfur metabolism; hydrogen sulfide biosynthesis; sulfite from sulfate: step 1/3. With CysD forms the ATP sulfurylase (ATPS) that catalyzes the adenylation of sulfate producing adenosine 5'-phosphosulfate (APS) and diphosphate, the first enzymatic step in sulfur assimilation pathway. APS synthesis involves the formation of a high-energy phosphoric-sulfuric acid anhydride bond driven by GTP hydrolysis by CysN coupled to ATP hydrolysis by CysD. The polypeptide is Sulfate adenylyltransferase subunit 1 (Francisella tularensis subsp. tularensis (strain WY96-3418)).